A 299-amino-acid chain; its full sequence is Diphthine methyl ester synthase 1 (299 aa).

Residues L9, D85, G88, 113–114 (SV), L164, L222, and H247 contribute to the S-adenosyl-L-methionine site.

Belongs to the diphthine synthase family.

It localises to the cytoplasm. It catalyses the reaction 2-[(3S)-amino-3-carboxypropyl]-L-histidyl-[translation elongation factor 2] + 4 S-adenosyl-L-methionine = diphthine methyl ester-[translation elongation factor 2] + 4 S-adenosyl-L-homocysteine + 3 H(+). It functions in the pathway protein modification; peptidyl-diphthamide biosynthesis. Its function is as follows. S-adenosyl-L-methionine-dependent methyltransferase that catalyzes four methylations of the modified target histidine residue in translation elongation factor 2 (EF-2), to form an intermediate called diphthine methyl ester. The four successive methylation reactions represent the second step of diphthamide biosynthesis. This is Diphthine methyl ester synthase 1 (DPH5) from Candida albicans (strain SC5314 / ATCC MYA-2876) (Yeast).